Consider the following 307-residue polypeptide: GTPase Era (307 aa).

Residues 7–181 form the Era-type G domain; it reads RCGWVALLGP…VKLVKSKLPV (175 aa). The interval 15–22 is G1; the sequence is GPPNAGKS. A GTP-binding site is contributed by 15–22; sequence GPPNAGKS. Residues 41 to 45 are G2; sequence QTTRN. Residues 62-65 form a G3 region; it reads DTPG. Residues 62-66 and 130-133 contribute to the GTP site; these read DTPGI and NKVD. The segment at 130-133 is G4; it reads NKVD. The G5 stretch occupies residues 160–162; sequence VSA. In terms of domain architecture, KH type-2 spans 212–290; that stretch reads LRQELPYSVA…HLELWVKVRE (79 aa).

The protein belongs to the TRAFAC class TrmE-Era-EngA-EngB-Septin-like GTPase superfamily. Era GTPase family. As to quaternary structure, monomer.

The protein resides in the cytoplasm. It is found in the cell inner membrane. An essential GTPase that binds both GDP and GTP, with rapid nucleotide exchange. Plays a role in 16S rRNA processing and 30S ribosomal subunit biogenesis and possibly also in cell cycle regulation and energy metabolism. In Nitratidesulfovibrio vulgaris (strain DSM 19637 / Miyazaki F) (Desulfovibrio vulgaris), this protein is GTPase Era.